The sequence spans 261 residues: MNTFFKLGSLIQRTASQISSSFPKSRFFSDGESAVYHHARLFKKPLSTKLKFNLVNSVSLMGFVDRSIQVMNTGPDRFGVFTILRVKDPLNPNRSFRISLRMWDAMARTCIAHLKLNDHILVSGRLESYSKSSSDVYSGLNLDYQVKVAEVNYVAAPPSHVLDSQISKNPKTKTEDDIEESKKDEIYLWQVFFSNPYDWWDNRRNKKNPKQPDFKHKDTGEALWLCSDLPDWITRRLELFDQKNRFYDEEKTRRDRLSDYI.

The N-terminal 28 residues, 1-28 (MNTFFKLGSLIQRTASQISSSFPKSRFF), are a transit peptide targeting the mitochondrion. In terms of domain architecture, SSB spans 55-155 (VNSVSLMGFV…VKVAEVNYVA (101 aa)). Residues 189-238 (WQVFFSNPYDWWDNRRNKKNPKQPDFKHKDTGEALWLCSDLPDWITRRLE) form a PDF region region.

In terms of tissue distribution, expressed in root elongation zone and in gametophytic cells.

The protein resides in the mitochondrion. Functionally, regulates mitochondrial DNA recombination. Represses homologous recombination, preventing mitochondrial genome instability and unbalanced transmission of alternative mtDNA configurations. Binds preferentially single-stranded DNA. Does not bind to RNA. The chain is Protein OSB1, mitochondrial (OSB1) from Arabidopsis thaliana (Mouse-ear cress).